Consider the following 269-residue polypeptide: Phosphate import ATP-binding protein PstB (269 aa).

In terms of domain architecture, ABC transporter spans A22–V264. Position 54 to 61 (G54 to T61) interacts with ATP.

This sequence belongs to the ABC transporter superfamily. Phosphate importer (TC 3.A.1.7) family. The complex is composed of two ATP-binding proteins (PstB), two transmembrane proteins (PstC and PstA) and a solute-binding protein (PstS).

It localises to the cell inner membrane. The enzyme catalyses phosphate(out) + ATP + H2O = ADP + 2 phosphate(in) + H(+). Part of the ABC transporter complex PstSACB involved in phosphate import. Responsible for energy coupling to the transport system. This chain is Phosphate import ATP-binding protein PstB, found in Thermosynechococcus vestitus (strain NIES-2133 / IAM M-273 / BP-1).